The primary structure comprises 657 residues: ER degradation-enhancing alpha-mannosidase-like protein 1 (657 aa).

Over methionine 1–arginine 4 the chain is Cytoplasmic. The helical; Signal-anchor for type II membrane protein transmembrane segment at alanine 5–phenylalanine 25 threads the bilayer. Residues glycine 26–isoleucine 657 are Lumenal-facing. Positions serine 48–methionine 94 are disordered. Residues asparagine 181, asparagine 198, asparagine 299, asparagine 342, and asparagine 624 are each glycosylated (N-linked (GlcNAc...) asparagine).

This sequence belongs to the glycosyl hydrolase 47 family. As to quaternary structure, interacts with DNAJC10. Interacts with DERL2 and DERL3. Binds to SEL1L.

Its subcellular location is the endoplasmic reticulum membrane. Its function is as follows. Extracts misfolded glycoproteins, but not glycoproteins undergoing productive folding, from the calnexin cycle. It is directly involved in endoplasmic reticulum-associated degradation (ERAD) and targets misfolded glycoproteins for degradation in an N-glycan-independent manner, probably by forming a complex with SEL1L. It has low mannosidase activity, catalyzing mannose trimming from Man8GlcNAc2 to Man7GlcNAc2. This chain is ER degradation-enhancing alpha-mannosidase-like protein 1 (EDEM1), found in Homo sapiens (Human).